Here is a 268-residue protein sequence, read N- to C-terminus: Probable chemotaxis protein methyltransferase (268 aa).

Positions 1-262 (MIYSDAGIFL…GITTYRYTTK (262 aa)) constitute a CheR-type methyltransferase domain. S-adenosyl-L-methionine contacts are provided by residues asparagine 60, threonine 62, arginine 66, glutamate 104, aspartate 130, 188-189 (NL), and 205-206 (RN).

The catalysed reaction is L-glutamyl-[protein] + S-adenosyl-L-methionine = [protein]-L-glutamate 5-O-methyl ester + S-adenosyl-L-homocysteine. Methylation of the membrane-bound methyl-accepting chemotaxis proteins (MCP) to form gamma-glutamyl methyl ester residues in MCP. The polypeptide is Probable chemotaxis protein methyltransferase (cheRch1) (Rhizobium etli (strain ATCC 51251 / DSM 11541 / JCM 21823 / NBRC 15573 / CFN 42)).